We begin with the raw amino-acid sequence, 262 residues long: Aminoglycoside 3'-phosphotransferase (262 aa).

The Proton acceptor role is filled by Asp-187.

It belongs to the aminoglycoside phosphotransferase family. In terms of assembly, monomer.

It localises to the cytoplasm. The catalysed reaction is kanamycin A + ATP = kanamycin 3'-phosphate + ADP + H(+). Its function is as follows. Resistance to butirosin and structurally-related aminoglycosides, including kanamycin and amikacin. The protein is Aminoglycoside 3'-phosphotransferase of Niallia circulans (Bacillus circulans).